The following is a 251-amino-acid chain: Triosephosphate isomerase (251 aa).

9-11 (NWK) contributes to the substrate binding site. His-95 functions as the Electrophile in the catalytic mechanism. The Proton acceptor role is filled by Glu-167. Residues Gly-173, Ser-213, and 234-235 (GG) each bind substrate.

This sequence belongs to the triosephosphate isomerase family. In terms of assembly, homodimer.

It localises to the cytoplasm. It catalyses the reaction D-glyceraldehyde 3-phosphate = dihydroxyacetone phosphate. It functions in the pathway carbohydrate biosynthesis; gluconeogenesis. The protein operates within carbohydrate degradation; glycolysis; D-glyceraldehyde 3-phosphate from glycerone phosphate: step 1/1. In terms of biological role, involved in the gluconeogenesis. Catalyzes stereospecifically the conversion of dihydroxyacetone phosphate (DHAP) to D-glyceraldehyde-3-phosphate (G3P). The polypeptide is Triosephosphate isomerase (Geobacter metallireducens (strain ATCC 53774 / DSM 7210 / GS-15)).